The sequence spans 642 residues: 1-deoxy-D-xylulose-5-phosphate synthase (642 aa).

Thiamine diphosphate contacts are provided by residues His79 and 120–122 (GHS). Position 151 (Asp151) interacts with Mg(2+). Thiamine diphosphate is bound by residues 152–153 (GS), Asn180, Tyr290, and Glu372. Asn180 contributes to the Mg(2+) binding site.

Belongs to the transketolase family. DXPS subfamily. As to quaternary structure, homodimer. The cofactor is Mg(2+). Thiamine diphosphate serves as cofactor.

The catalysed reaction is D-glyceraldehyde 3-phosphate + pyruvate + H(+) = 1-deoxy-D-xylulose 5-phosphate + CO2. Its pathway is metabolic intermediate biosynthesis; 1-deoxy-D-xylulose 5-phosphate biosynthesis; 1-deoxy-D-xylulose 5-phosphate from D-glyceraldehyde 3-phosphate and pyruvate: step 1/1. Functionally, catalyzes the acyloin condensation reaction between C atoms 2 and 3 of pyruvate and glyceraldehyde 3-phosphate to yield 1-deoxy-D-xylulose-5-phosphate (DXP). This chain is 1-deoxy-D-xylulose-5-phosphate synthase, found in Rhodospirillum centenum (strain ATCC 51521 / SW).